A 1021-amino-acid polypeptide reads, in one-letter code: Sodium/potassium-transporting ATPase subunit alpha-1 (1021 aa).

Positions 1–5 (MGKGV) are excised as a propeptide. Over residues 1-11 (MGKGVGRDKYE) the composition is skewed to basic and acidic residues. The segment at 1 to 36 (MGKGVGRDKYEPAAVSEHGDKKKAKKERDMDELKKE) is disordered. The Cytoplasmic portion of the chain corresponds to 6-85 (GRDKYEPAAV…NALTPPPTTP (80 aa)). Residue Lys9 is modified to N6-acetyllysine. Tyr10 carries the post-translational modification Phosphotyrosine. A Phosphoserine; by PKC modification is found at Ser16. At Lys21 the chain carries N6-acetyllysine. The span at 26–36 (KERDMDELKKE) shows a compositional bias: basic and acidic residues. 2 positions are modified to phosphoserine: Ser38 and Ser45. The segment at 80-82 (PPP) is phosphoinositide-3 kinase binding. A helical membrane pass occupies residues 86-106 (EWVKFCRQLFGGFSMLLWIGA). The Extracellular segment spans residues 107–129 (VLCFLAYGIQAATEEEPQNDNLY). A helical membrane pass occupies residues 130-150 (LGVVLSAVVIITGCFSYYQEA). At 151–286 (KSSKIMESFK…GGQTPIAAEI (136 aa)) the chain is on the cytoplasmic side. Residue Ser226 is modified to Phosphoserine. At Tyr258 the chain carries Phosphotyrosine. The helical transmembrane segment at 287–306 (EHFIHIITGVAVFLGVSFFI) threads the bilayer. Over 307–318 (LSLILEYTWLEA) the chain is Extracellular. A helical transmembrane segment spans residues 319–336 (VIFLIGIIVANVPEGLLA). Topologically, residues 337–770 (TVTVCLTLTA…EEGRLIFDNL (434 aa)) are cytoplasmic. Asp374 acts as the 4-aspartylphosphate intermediate in catalysis. Residues Ser450 and Ser482 each carry the phosphoserine modification. An ATP-binding site is contributed by Lys485. Tyr540 is modified (phosphotyrosine). The tract at residues 594–715 (RAAVPDAVGK…QGAIVAVTGD (122 aa)) is mediates interaction with SCN7A. At Ser666 the chain carries Phosphoserine. Mg(2+) contacts are provided by Asp715 and Asp719. Residues 771–790 (KKSIAYTLTSNIPEITPFLI) form a helical membrane-spanning segment. Topologically, residues 791–800 (FIIANIPLPL) are extracellular. Residues 801-821 (GTVTILCIDLGTDMVPAISLA) traverse the membrane as a helical segment. The Cytoplasmic portion of the chain corresponds to 822–841 (YEQAESDIMKRQPRNPQTDK). Residues 842-864 (LVNERLISMAYGQIGMIQALGGF) traverse the membrane as a helical segment. Residues 865-916 (FTYFVIMAENGFLPNHLLGIRVTWDDRWINDVEDSYGQQWTYEQRKIVEFTC) lie on the Extracellular side of the membrane. The helical transmembrane segment at 917 to 936 (HTAFFVSIVVVQWADLVICK) threads the bilayer. The Cytoplasmic segment spans residues 937-949 (TRRNSVFQQGMKN). Ser941 bears the Phosphoserine; by PKA mark. Residues 950 to 968 (KILIFGLFEETALAAFLSY) traverse the membrane as a helical segment. Topologically, residues 969-983 (CPGMGVALRMYPLKP) are extracellular. A helical membrane pass occupies residues 984–1004 (TWWFCAFPYSLLIFVYDEVRK). Topologically, residues 1005 to 1021 (LIIRRRPGGWVEKETYY) are cytoplasmic.

It belongs to the cation transport ATPase (P-type) (TC 3.A.3) family. Type IIC subfamily. As to quaternary structure, the sodium/potassium-transporting ATPase is composed of a catalytic alpha subunit, an auxiliary non-catalytic beta subunit and an additional regulatory subunit. Interacts with regulatory subunit FXYD1. Interacts with regulatory subunit FXYD3. Interacts with SIK1. Interacts with SLC35G1 and STIM1. Interacts with CLN3; this interaction regulates the sodium/potassium-transporting ATPase complex localization at the plasma membrane. Interacts with SCN7A; activates ATP1A1 P-type sodium:potassium-exchanging transporter activity which indirectly signals to nearby neurons to regulate sodium homeostasis. In terms of processing, phosphorylation on Tyr-10 modulates pumping activity. Phosphorylation of Ser-941 by PKA modulates the response of ATP1A1 to PKC. Dephosphorylation by protein phosphatase 2A (PP2A) following increases in intracellular sodium, leading to increase catalytic activity.

Its subcellular location is the cell membrane. It localises to the basolateral cell membrane. It is found in the sarcolemma. The protein resides in the cell projection. The protein localises to the axon. Its subcellular location is the melanosome. The catalysed reaction is K(+)(out) + Na(+)(in) + ATP + H2O = K(+)(in) + Na(+)(out) + ADP + phosphate + H(+). Specifically inhibited by cardiac glycosides such as digoxin or ouabain. In terms of biological role, this is the catalytic component of the active enzyme, which catalyzes the hydrolysis of ATP coupled with the exchange of sodium and potassium ions across the plasma membrane. This action creates the electrochemical gradient of sodium and potassium ions, providing the energy for active transport of various nutrients. Could also be part of an osmosensory signaling pathway that senses body-fluid sodium levels and controls salt intake behavior as well as voluntary water intake to regulate sodium homeostasis. In Ovis aries (Sheep), this protein is Sodium/potassium-transporting ATPase subunit alpha-1 (ATP1A1).